A 638-amino-acid chain; its full sequence is Cytoplasmic dynein 1 intermediate chain 2 (638 aa).

2 stretches are compositionally biased toward basic and acidic residues: residues 1–13 (MSDKSELKAELER) and 20–43 (QIREEKKRKEEERKKKETDQKKEA). Disordered stretches follow at residues 1-135 (MSDK…GRGP) and 154-209 (VTYT…HELT). Serine 2 carries the post-translational modification N-acetylserine. At serine 51 the chain carries Diphosphoserine. Residues serine 51 and serine 90 each carry the phosphoserine modification. The segment covering 88–97 (PSSKSVSTPS) has biased composition (low complexity). Threonine 95 is subject to Phosphothreonine. Serine 97, serine 101, and serine 104 each carry phosphoserine. The tract at residues 133–165 (RGPIKLGMAKITQVDFPPREIVTYTKETQTPVT) is interaction with DYNLT1. The segment covering 190–209 (EKILKKDEENDSKAPPHELT) has biased composition (basic and acidic residues). 6 WD repeats span residues 277-326 (SKHR…TTPE), 330-370 (HCQS…RTPV), 379-420 (AHTH…HPQD), 429-469 (SKAV…AGIS), 474-519 (GHQG…PLYS), and 568-607 (EGNPALNRVRWTHSGREIAVGDSEGQIVIYDVGEQIAVPR).

The protein belongs to the dynein intermediate chain family. As to quaternary structure, homodimer. The cytoplasmic dynein 1 complex consists of two catalytic heavy chains (HCs) and a number of non-catalytic subunits presented by intermediate chains (ICs), light intermediate chains (LICs) and light chains (LCs); the composition seems to vary in respect to the IC, LIC and LC composition. The heavy chain homodimer serves as a scaffold for the probable homodimeric assembly of the respective non-catalytic subunits. The ICs and LICs bind directly to the HC dimer and the LCs assemble on the IC dimer. Interacts with DYNLT3. Interacts with DYNLT1. Interacts (dephosphorylated at Ser-90) with DCTN1. Interacts with BICD2. Interacts with SPEF2. Interacts with CFAP61. Post-translationally, the phosphorylation status of Ser-90 appears to be involved in dynactin-dependent target binding. In terms of processing, pyrophosphorylation by 5-diphosphoinositol pentakisphosphate (5-IP7) promotes interaction with DCTN1. Serine pyrophosphorylation is achieved by Mg(2+)-dependent, but enzyme independent transfer of a beta-phosphate from a inositol pyrophosphate to a pre-phosphorylated serine residue. In terms of tissue distribution, skeletal muscle, testis, kidney, brain, heart and spleen.

It localises to the cytoplasm. The protein resides in the cytoskeleton. In terms of biological role, acts as one of several non-catalytic accessory components of the cytoplasmic dynein 1 complex that are thought to be involved in linking dynein to cargos and to adapter proteins that regulate dynein function. Cytoplasmic dynein 1 acts as a motor for the intracellular retrograde motility of vesicles and organelles along microtubules. The intermediate chains mediate the binding of dynein to dynactin via its 150 kDa component (p150-glued) DCTN1. Involved in membrane-transport, such as Golgi apparatus, late endosomes and lysosomes. This chain is Cytoplasmic dynein 1 intermediate chain 2 (Dync1i2), found in Rattus norvegicus (Rat).